The chain runs to 591 residues: Aspartate--tRNA ligase (591 aa).

An L-aspartate-binding site is contributed by Glu-176. Positions 200–203 (QILK) are aspartate. Arg-222 lines the L-aspartate pocket. Residues 222–224 (RDE) and Gln-231 each bind ATP. An L-aspartate-binding site is contributed by His-450. Glu-484 is a binding site for ATP. Residue Arg-491 participates in L-aspartate binding. Position 536 to 539 (536 to 539 (GLDR)) interacts with ATP.

This sequence belongs to the class-II aminoacyl-tRNA synthetase family. Type 1 subfamily. As to quaternary structure, homodimer.

The protein localises to the cytoplasm. It catalyses the reaction tRNA(Asp) + L-aspartate + ATP = L-aspartyl-tRNA(Asp) + AMP + diphosphate. In terms of biological role, catalyzes the attachment of L-aspartate to tRNA(Asp) in a two-step reaction: L-aspartate is first activated by ATP to form Asp-AMP and then transferred to the acceptor end of tRNA(Asp). In Listeria welshimeri serovar 6b (strain ATCC 35897 / DSM 20650 / CCUG 15529 / CIP 8149 / NCTC 11857 / SLCC 5334 / V8), this protein is Aspartate--tRNA ligase.